A 355-amino-acid chain; its full sequence is Probable aldo-keto reductase 3 (355 aa).

The active-site Proton donor is Tyr70. A substrate-binding site is contributed by His138. 217 to 227 provides a ligand contact to NADP(+); that stretch reads SPLGRGFFSSG.

The protein belongs to the aldo/keto reductase family.

The protein is Probable aldo-keto reductase 3 of Oryza sativa subsp. indica (Rice).